The following is a 237-amino-acid chain: Cysteine-rich venom protein DIS1 (237 aa).

An N-terminal signal peptide occupies residues 1–18 (MFVFILLSLAAVLQQSFG). Residues 37–165 (VDKHNAFRRS…SYNYFYVCQY (129 aa)) enclose the SCP domain. 7 disulfides stabilise this stretch: C74–C152, C91–C166, C147–C163, C185–C192, C188–C197, C201–C234, and C219–C232. Residues 201-234 (CSREDVFMNCKSLVAQSNCQDDYIRKNCPATCFC) form the ShKT domain.

It belongs to the CRISP family. As to expression, expressed by the venom gland.

The protein localises to the secreted. Weakly blocks contraction of smooth muscle elicited by high potassium-induced depolarization, but does not block caffeine-stimulated contraction. May target voltage-gated calcium channels on smooth muscle. In Dispholidus typus (Boomslang), this protein is Cysteine-rich venom protein DIS1.